The sequence spans 133 residues: Ribosome-binding factor A (133 aa).

This sequence belongs to the RbfA family. In terms of assembly, monomer. Binds 30S ribosomal subunits, but not 50S ribosomal subunits or 70S ribosomes.

It is found in the cytoplasm. Functionally, one of several proteins that assist in the late maturation steps of the functional core of the 30S ribosomal subunit. Associates with free 30S ribosomal subunits (but not with 30S subunits that are part of 70S ribosomes or polysomes). Required for efficient processing of 16S rRNA. May interact with the 5'-terminal helix region of 16S rRNA. The protein is Ribosome-binding factor A of Trichormus variabilis (strain ATCC 29413 / PCC 7937) (Anabaena variabilis).